We begin with the raw amino-acid sequence, 260 residues long: Collagenase (260 aa).

A signal peptide spans 1–16; sequence MKFLLVFALALATTSA. Residues 17–30 constitute a propeptide that is removed on maturation; sequence FQHPASIFELREGR. The Peptidase S1 domain maps to 31 to 257; the sequence is IINGYEAYTG…YMDWIQQNTG (227 aa). The cysteines at positions 60 and 76 are disulfide-linked. Residues H75 and D118 each act as charge relay system in the active site. 2 disulfide bridges follow: C181-C196 and C206-C234. S210 functions as the Charge relay system in the catalytic mechanism.

It belongs to the peptidase S1 family.

It localises to the secreted. It carries out the reaction Hydrolysis of proteins including native collagen at Xaa-|-Ala bond leaving an N-terminal (75%) and a C-terminal (25%) fragment.. Its activity is regulated as follows. Inhibited by diisopropylfluorophosphate. Functionally, this enzyme is a serine protease capable of degrading the native triple helix of collagen. Also cleaves the B chain of insulin at the 15-Leu-|-Try-16 and 22-Arg-|-Gly-23 bonds. Hydrolyzes casein, but not Px-Pro-Leu-Gly-Pro-DArg, BzArgNHPh, AcTyrNHPh, 2-naphthyl phosphate, 2-naphthyl butyrate, 2-naphthyl caprylate, 2-naphthyl myristate, L-leucine 2-2-naphthylamide, L-valine 2-naphthylamide, L-cysteine 2-naphthylamide or L-glutarylphenylalanine 2-naphthylamide. In Hypoderma lineatum (Early cattle grub), this protein is Collagenase.